The sequence spans 150 residues: Transcriptional regulator MraZ (150 aa).

SpoVT-AbrB domains lie at 9–54 (QSIH…PPEE) and 83–126 (AEEC…NKST).

The protein belongs to the MraZ family. As to quaternary structure, forms oligomers.

The protein localises to the cytoplasm. It localises to the nucleoid. The polypeptide is Transcriptional regulator MraZ (Syntrophobacter fumaroxidans (strain DSM 10017 / MPOB)).